Consider the following 1809-residue polypeptide: Stereocilin (1809 aa).

Positions 1–22 (MALSLQPQLLLLLSLLPQEVTS) are cleaved as a signal peptide. N-linked (GlcNAc...) asparagine glycans are attached at residues Asn63, Asn200, Asn295, Asn352, and Asn364. Residues 376-426 (PATPRPPPTTPRPPPTTPQPPPTTTQPIPDTTQPPPVTPRPPPTTPQPPPS) form a disordered region. Pro residues-rich tracts occupy residues 378–399 (TPRP…PPTT) and 407–426 (TQPP…PPPS). N-linked (GlcNAc...) asparagine glycosylation is found at Asn467, Asn516, Asn580, Asn605, Asn696, Asn860, Asn952, Asn1000, Asn1213, and Asn1308.

This sequence belongs to the stereocilin family. In terms of tissue distribution, strongly expressed in the inner ear, detected in the testis, and barely detected in the eye. Detected in the six sensory areas of the inner ear by immunofluorescence. Expressed only in the sensory hair cells and associated with the stereocilia, the stiff microvilli forming the structure for mechanoreception of sound stimulation.

The protein localises to the cell surface. It is found in the cell projection. The protein resides in the kinocilium. It localises to the stereocilium. In terms of biological role, essential to the formation of horizontal top connectors between outer hair cell stereocilia. The chain is Stereocilin (Strc) from Mus musculus (Mouse).